Here is a 496-residue protein sequence, read N- to C-terminus: Glycerol kinase (496 aa).

Thr-12 is an ADP binding site. Thr-12, Thr-13, and Ser-14 together coordinate ATP. Position 12 (Thr-12) interacts with sn-glycerol 3-phosphate. ADP is bound at residue Arg-16. Sn-glycerol 3-phosphate contacts are provided by Arg-82, Glu-83, and Tyr-134. Residues Arg-82, Glu-83, and Tyr-134 each contribute to the glycerol site. Position 230 is a phosphohistidine; by HPr (His-230). A sn-glycerol 3-phosphate-binding site is contributed by Asp-244. The glycerol site is built by Asp-244 and Gln-245. ADP contacts are provided by Thr-266 and Gly-309. Thr-266, Gly-309, Gln-313, and Gly-410 together coordinate ATP. Positions 410 and 414 each coordinate ADP.

The protein belongs to the FGGY kinase family. Homotetramer and homodimer (in equilibrium). Post-translationally, the phosphoenolpyruvate-dependent sugar phosphotransferase system (PTS), including enzyme I, and histidine-containing protein (HPr) are required for the phosphorylation, which leads to the activation of the enzyme.

It catalyses the reaction glycerol + ATP = sn-glycerol 3-phosphate + ADP + H(+). Its pathway is polyol metabolism; glycerol degradation via glycerol kinase pathway; sn-glycerol 3-phosphate from glycerol: step 1/1. Activated by phosphorylation and inhibited by fructose 1,6-bisphosphate (FBP). Key enzyme in the regulation of glycerol uptake and metabolism. Catalyzes the phosphorylation of glycerol to yield sn-glycerol 3-phosphate. This Bacillus thuringiensis (strain Al Hakam) protein is Glycerol kinase.